The chain runs to 502 residues: Hexose transporter 1 (502 aa).

Over 1-26 (MKKSSKEISSSQSLKNGGSDHFFNTS) the chain is Cytoplasmic. A helical transmembrane segment spans residues 27–47 (LMYVLAACLASFIFGYQVSVL). At 48 to 76 (NTIKNFIVIEFGWCTGNKVECDDSTLKSS) the chain is on the extracellular side. C61 and C68 are joined by a disulfide. Residues 77–97 (FLLASVFIGAVVGSGFSGYLV) traverse the membrane as a helical segment. Residues 98–102 (QHGRR) lie on the Cytoplasmic side of the membrane. The chain crosses the membrane as a helical span at residues 103-123 (FSLLVIYNFFILVSILTSITH). Residues 124 to 132 (HFHTILFSR) are Extracellular-facing. A helical membrane pass occupies residues 133–153 (LLSGFGIGLITVSVPMYISEM). The Cytoplasmic portion of the chain corresponds to 154–163 (THKDKKGAYG). Residues 164–184 (VLHQLFITFGIFVAVLLGMAM) form a helical membrane-spanning segment. An alpha-D-glucose-binding site is contributed by Q167. A beta-D-glucose-binding site is contributed by Q167. The Extracellular portion of the chain corresponds to 185 to 205 (GEAPDAKSVDALGEFQKIWWR). The chain crosses the membrane as a helical span at residues 206–226 (LMFFFPCLISILGIVLLTFFY). Over 227-291 (KEETPYYLFE…RAMQIPSYRN (65 aa)) the chain is Cytoplasmic. The chain crosses the membrane as a helical span at residues 292–312 (VILLGCILSGLQQFTGINVLV). The alpha-D-glucose site is built by Q303, Q304, and N309. Q303 is a binding site for beta-D-glucose. A beta-D-glucose-binding site is contributed by N309. At 313 to 329 (SNSNELYKEFLSNKLIT) the chain is on the extracellular side. The helical transmembrane segment at 330–350 (TLSVIMTVVNFLMTFPAIYIV) threads the bilayer. Position 339 (N339) interacts with beta-D-glucose. Residues 351 to 356 (EKLGRK) are Cytoplasmic-facing. Residues 357–377 (TLLLCGCAGVICAFLPTAIAN) form a helical membrane-spanning segment. At 378-390 (QIDSTSAFVKNLS) the chain is on the extracellular side. The helical transmembrane segment at 391-411 (IAATFVMIISFAVSYGPVLWI) threads the bilayer. W410 serves as a coordination point for alpha-D-glucose. The Cytoplasmic portion of the chain corresponds to 412–427 (YLHEMFPSEIKDSAAS). A helical transmembrane segment spans residues 428–448 (LASLVNWVCAIIVVFPSDIII). The Extracellular segment spans residues 449-453 (KKSPT). The chain crosses the membrane as a helical span at residues 454-474 (ILFFIFSGMSILSFLFIFFFI). Over 475–502 (KETKGGEIGTSPYITMEERQKHMGKSAV) the chain is Cytoplasmic.

This sequence belongs to the major facilitator superfamily. Sugar transporter (TC 2.A.1.1) family. Homodimer.

It is found in the cell membrane. It carries out the reaction D-glucose(out) = D-glucose(in). It catalyses the reaction D-fructose(out) = D-fructose(in). The catalysed reaction is D-galactose(in) = D-galactose(out). The enzyme catalyses D-mannose(out) = D-mannose(in). It carries out the reaction D-glucosamine(out) = D-glucosamine(in). It catalyses the reaction D-xylose(out) = D-xylose(in). Inhibited by compound 3361 (3-O-((undec-10-en)-1-yl)-D-glucose). Its function is as follows. Sodium-independent facilitative hexose transporter. Can transport D-glucose and D-fructose. Can transport D-mannose, D-galactose, D-xylose and D-glucosamine. In Plasmodium vivax (strain Brazil I), this protein is Hexose transporter 1.